The following is a 192-amino-acid chain: UPF0462 protein C4orf33 homolog (192 aa).

This sequence belongs to the UPF0462 family.

The protein is UPF0462 protein C4orf33 homolog (D3Ertd751e) of Mus musculus (Mouse).